The sequence spans 190 residues: MPSIHPLIDNGITKGDEHFKGGKLYCHCPSNKVEVTLSSNVAHNHACGCSKCWKPKGALFSVVGVVPVDALSVTANGNKLHVVDSSAAIQRNACKDCGVHLFGRIVNDHPFKGLDFVHVELSDSKGWQEPQFAAFVSSIIEQGFPPNQIDAVREKFRKEGLQTYDVLSPTLMDLIATYTGQKSGKLSSKL.

In terms of domain architecture, CENP-V/GFA spans 19-165 (FKGGKLYCHC…FRKEGLQTYD (147 aa)). The Zn(2+) site is built by cysteine 26, cysteine 28, cysteine 47, cysteine 49, cysteine 52, cysteine 94, and cysteine 97.

It belongs to the Gfa family. Requires Zn(2+) as cofactor.

It catalyses the reaction S-(hydroxymethyl)glutathione = glutathione + formaldehyde. It participates in one-carbon metabolism; formaldehyde degradation; formate from formaldehyde (glutathione route): step 1/3. Its function is as follows. Catalyzes the condensation of formaldehyde and glutathione to S-hydroxymethylglutathione. The sequence is that of Putative glutathione-dependent formaldehyde-activating enzyme from Phaeosphaeria nodorum (strain SN15 / ATCC MYA-4574 / FGSC 10173) (Glume blotch fungus).